A 447-amino-acid chain; its full sequence is N-succinylarginine dihydrolase (447 aa).

Substrate contacts are provided by residues 19–28, Asn110, and 137–138; these read AGLSFGNEAS and HR. Glu174 is a catalytic residue. Arg212 contributes to the substrate binding site. His248 is an active-site residue. Residues Asp250 and Asn359 each coordinate substrate. Cys365 acts as the Nucleophile in catalysis.

This sequence belongs to the succinylarginine dihydrolase family. In terms of assembly, homodimer.

The catalysed reaction is N(2)-succinyl-L-arginine + 2 H2O + 2 H(+) = N(2)-succinyl-L-ornithine + 2 NH4(+) + CO2. Its pathway is amino-acid degradation; L-arginine degradation via AST pathway; L-glutamate and succinate from L-arginine: step 2/5. Catalyzes the hydrolysis of N(2)-succinylarginine into N(2)-succinylornithine, ammonia and CO(2). The protein is N-succinylarginine dihydrolase of Salmonella dublin (strain CT_02021853).